Here is a 1463-residue protein sequence, read N- to C-terminus: Alpha-agarase (1463 aa).

The first 27 residues, 1–27, serve as a signal peptide directing secretion; it reads MITSSKKIVSAMLSTSLWIGVASAAYA. Positions 28–684 are excised as a propeptide; it reads ETTNVEAEGY…PSTLSESIFT (657 aa). Disordered stretches follow at residues 166-191 and 512-549; these read VTPE…PGTP and TDDI…PQPG. The segment covering 518 to 536 has biased composition (polar residues); sequence CANTPSGETANATGCSSSQ. The 144-residue stretch at 534-677 folds into the PA14 domain; that stretch reads SSQEGGGTDP…GGTNFVHPST (144 aa). In terms of domain architecture, CBM6 spans 701-832; the sequence is IIVELESFVF…QWSGDRVRFT (132 aa).

The protein belongs to the glycosyl hydrolase 96 family. As to quaternary structure, monomer. Ca(2+) is required as a cofactor.

The enzyme catalyses Endohydrolysis of 1,3-alpha-L-galactosidic linkages in agarose, yielding agarotetraose as the major product.. In terms of biological role, alpha-agarase. Hydrolyzes agarose, agarohexaose, neoagarohexaose and porphyran. Hydrolysis of porphyran by this enzyme improves its antioxidant activity. Does not hydrolyze kappa-carrageenan, iota-carrageenen or lambda-carrageenan. This Thalassotalea agarivorans (Thalassomonas agarivorans) protein is Alpha-agarase.